Reading from the N-terminus, the 290-residue chain is MKSGFVSIIGRPSTGKSTLLNSICEHQISIISSIPQTTRNKIKGIFTDKRGQIIFIDTPGFHLSKKQFNIALMHNVHSAIKETELILYVIDIQDKPGIEENEILTIISKSKINFLVVINKIDIQKTKEREIMIFLEEKGIKKDNIIKISAEQKINIEEIKDKIYENLQEGPLYYPEEYYTDQEMNLRTSEIIRGVTIKKLKEELPYSLYIEIEILEDRKNKLFIKANIIVAVESQKGIIVGKGGKGIKTIGEEARKIISEIFEKKCDLFLQVKLRKNWNKNPKLIKNLIN.

The Era-type G domain occupies 2 to 169 (KSGFVSIIGR…KDKIYENLQE (168 aa)). Residues 10 to 17 (GRPSTGKS) form a G1 region. 10–17 (GRPSTGKS) is a binding site for GTP. The segment at 36–40 (QTTRN) is G2. The interval 57 to 60 (DTPG) is G3. GTP contacts are provided by residues 57–61 (DTPGF) and 119–122 (NKID). The interval 119–122 (NKID) is G4. Residues 148–150 (ISA) are G5. Positions 200–276 (LKEELPYSLY…DLFLQVKLRK (77 aa)) constitute a KH type-2 domain.

This sequence belongs to the TRAFAC class TrmE-Era-EngA-EngB-Septin-like GTPase superfamily. Era GTPase family. As to quaternary structure, monomer.

It localises to the cytoplasm. It is found in the cell inner membrane. In terms of biological role, an essential GTPase that binds both GDP and GTP, with rapid nucleotide exchange. Plays a role in 16S rRNA processing and 30S ribosomal subunit biogenesis and possibly also in cell cycle regulation and energy metabolism. The protein is GTPase Era of Borrelia turicatae (strain 91E135).